The chain runs to 375 residues: Trichodiene synthase (375 aa).

This sequence belongs to the trichodiene synthase family.

The catalysed reaction is (2E,6E)-farnesyl diphosphate = trichodiene + diphosphate. Its pathway is sesquiterpene biosynthesis; trichothecene biosynthesis. Functionally, TS is a member of the terpene cyclase group of enzymes. It catalyzes the isomerization and cyclization of farnesyl pyro-phosphate to form trichodiene, the first cyclic intermediate in the biosynthetic pathway for trichothecenes. It serves to branch trichothecene biosynthesis from the isoprenoid pathway. In Fusarium asiaticum, this protein is Trichodiene synthase (TRI5).